The following is a 259-amino-acid chain: Deoxyribose-phosphate aldolase (259 aa).

The Proton donor/acceptor role is filled by Asp102. Lys167 functions as the Schiff-base intermediate with acetaldehyde in the catalytic mechanism. The active-site Proton donor/acceptor is the Lys201.

This sequence belongs to the DeoC/FbaB aldolase family. DeoC type 2 subfamily.

It localises to the cytoplasm. The catalysed reaction is 2-deoxy-D-ribose 5-phosphate = D-glyceraldehyde 3-phosphate + acetaldehyde. It functions in the pathway carbohydrate degradation; 2-deoxy-D-ribose 1-phosphate degradation; D-glyceraldehyde 3-phosphate and acetaldehyde from 2-deoxy-alpha-D-ribose 1-phosphate: step 2/2. Catalyzes a reversible aldol reaction between acetaldehyde and D-glyceraldehyde 3-phosphate to generate 2-deoxy-D-ribose 5-phosphate. In Cronobacter sakazakii (strain ATCC BAA-894) (Enterobacter sakazakii), this protein is Deoxyribose-phosphate aldolase.